The sequence spans 591 residues: tRNA 5-methylaminomethyl-2-thiouridine biosynthesis bifunctional protein MnmC (591 aa).

Residues 1–232 form a tRNA (mnm(5)s(2)U34)-methyltransferase region; sequence MTPTAPSPLV…KRERLEAWRP (232 aa). An FAD-dependent cmnm(5)s(2)U34 oxidoreductase region spans residues 247-591; the sequence is IGGGIAGAAL…FDSPVTRSRL (345 aa).

This sequence in the N-terminal section; belongs to the methyltransferase superfamily. tRNA (mnm(5)s(2)U34)-methyltransferase family. The protein in the C-terminal section; belongs to the DAO family. FAD serves as cofactor.

Its subcellular location is the cytoplasm. The enzyme catalyses 5-aminomethyl-2-thiouridine(34) in tRNA + S-adenosyl-L-methionine = 5-methylaminomethyl-2-thiouridine(34) in tRNA + S-adenosyl-L-homocysteine + H(+). Functionally, catalyzes the last two steps in the biosynthesis of 5-methylaminomethyl-2-thiouridine (mnm(5)s(2)U) at the wobble position (U34) in tRNA. Catalyzes the FAD-dependent demodification of cmnm(5)s(2)U34 to nm(5)s(2)U34, followed by the transfer of a methyl group from S-adenosyl-L-methionine to nm(5)s(2)U34, to form mnm(5)s(2)U34. In Caulobacter vibrioides (strain ATCC 19089 / CIP 103742 / CB 15) (Caulobacter crescentus), this protein is tRNA 5-methylaminomethyl-2-thiouridine biosynthesis bifunctional protein MnmC.